The following is a 151-amino-acid chain: Caveolin-3 (151 aa).

Residues 1–83 (MMTEEHTDLE…RLLSTLLGVP (83 aa)) lie on the Cytoplasmic side of the membrane. Residue lysine 38 forms a Glycyl lysine isopeptide (Lys-Gly) (interchain with G-Cter in SUMO3) linkage. Residues 84-104 (LALLWGFLFACISFCHIWAVV) constitute an intramembrane region (helical). Over 105 to 151 (PCIKSYLIEIQCISHIYSLCIRTFCNPLFAALGQVCSNIKVVLRREG) the chain is Cytoplasmic.

It belongs to the caveolin family. As to quaternary structure, homooligomer. Interacts with DYSF. Interacts with DLG1 and KCNA5; forms a ternary complex. Interacts with DAG1 (via its C-terminal); the interaction prevents binding of DAG1 with DMD. Interacts with TRIM72. Interacts with MUSK; may regulate MUSK signaling. Interacts with POPDC1. Interacts with CAVIN1, CAVIN2 and CAVIN4. Sumoylation with SUMO3 by PIAS4 may reduce agonist-induced internalization and desensitization of adrenergic receptor ABRD2. In terms of tissue distribution, expressed predominantly in muscle.

It is found in the golgi apparatus membrane. The protein resides in the cell membrane. The protein localises to the membrane. It localises to the caveola. Its subcellular location is the sarcolemma. Its function is as follows. May act as a scaffolding protein within caveolar membranes. Interacts directly with G-protein alpha subunits and can functionally regulate their activity. May also regulate voltage-gated potassium channels. Plays a role in the sarcolemma repair mechanism of both skeletal muscle and cardiomyocytes that permits rapid resealing of membranes disrupted by mechanical stress. Mediates the recruitment of CAVIN2 and CAVIN3 proteins to the caveolae. The chain is Caveolin-3 (Cav3) from Rattus norvegicus (Rat).